The following is a 300-amino-acid chain: NAD kinase (300 aa).

Catalysis depends on Asp-78, which acts as the Proton acceptor. Residues 78–79 (DG), 152–153 (ND), His-163, Arg-180, Asp-182, and 193–198 (TAYALS) contribute to the NAD(+) site.

The protein belongs to the NAD kinase family. Requires a divalent metal cation as cofactor.

The protein resides in the cytoplasm. It carries out the reaction NAD(+) + ATP = ADP + NADP(+) + H(+). Its function is as follows. Involved in the regulation of the intracellular balance of NAD and NADP, and is a key enzyme in the biosynthesis of NADP. Catalyzes specifically the phosphorylation on 2'-hydroxyl of the adenosine moiety of NAD to yield NADP. In Alcanivorax borkumensis (strain ATCC 700651 / DSM 11573 / NCIMB 13689 / SK2), this protein is NAD kinase.